Reading from the N-terminus, the 388-residue chain is Oxytocin receptor (388 aa).

Residues 1–38 are Extracellular-facing; sequence MEGTPAANWSIELDLGSGVPPGAEGNLTAGPPRRNEAL. N8 and N26 each carry an N-linked (GlcNAc...) asparagine glycan. The helical transmembrane segment at 39 to 63 threads the bilayer; that stretch reads ARVEVAVLCLILFLALSGNACVLLA. The Cytoplasmic portion of the chain corresponds to 64–74; sequence LRTTRHKHSRL. The helical transmembrane segment at 75–97 threads the bilayer; sequence FFFMKHLSIADLVVAVFQVLPQL. Residues 98–113 are Extracellular-facing; sequence LWDITFRFYGPDLLCR. Residues C112 and C187 are joined by a disulfide bond. A helical transmembrane segment spans residues 114-135; sequence LVKYLQVVGMFASTYLLLLMSL. Over 136–154 the chain is Cytoplasmic; it reads DRCLAICQPLRSLRRRTDR. A helical transmembrane segment spans residues 155-175; it reads LAVLATWLGCLVASVPQVHIF. At 176–202 the chain is on the extracellular side; sequence SLREVADGVFDCWAVFIQPWGPKAYVT. A helical membrane pass occupies residues 203 to 225; it reads WITLAVYIVPVIVLAACYGLISF. Over 226–274 the chain is Cytoplasmic; it reads KIWQNLRLKTAAAAAAAEGSDAAGGAGRAALARVSSVKLISKAKIRTVK. A helical membrane pass occupies residues 275–293; the sequence is MTFIIVLAFIVCWTPFFFV. The Extracellular segment spans residues 294–308; the sequence is QMWSVWDVNAPKEAS. The helical transmembrane segment at 309-331 threads the bilayer; it reads AFIIAMLLASLNSCCNPWIYMLF. The Cytoplasmic portion of the chain corresponds to 332–388; sequence TGHLFHELVQRFLCCSARYLKGSRPGETSISKKSNSSTFVLSRRSSSQRSCSQPSSA. The interval 354–388 is disordered; sequence SRPGETSISKKSNSSTFVLSRRSSSQRSCSQPSSA. Residues S365 and S367 each carry the phosphoserine modification. Residues 365–388 are compositionally biased toward low complexity; it reads SNSSTFVLSRRSSSQRSCSQPSSA.

The protein belongs to the G-protein coupled receptor 1 family. Vasopressin/oxytocin receptor subfamily.

The protein localises to the cell membrane. Its function is as follows. Receptor for oxytocin. The activity of this receptor is mediated by G proteins which activate a phosphatidylinositol-calcium second messenger system. This Mus musculus (Mouse) protein is Oxytocin receptor (Oxtr).